Consider the following 234-residue polypeptide: Leucyl/phenylalanyl-tRNA--protein transferase (234 aa).

It belongs to the L/F-transferase family.

It localises to the cytoplasm. It catalyses the reaction N-terminal L-lysyl-[protein] + L-leucyl-tRNA(Leu) = N-terminal L-leucyl-L-lysyl-[protein] + tRNA(Leu) + H(+). The catalysed reaction is N-terminal L-arginyl-[protein] + L-leucyl-tRNA(Leu) = N-terminal L-leucyl-L-arginyl-[protein] + tRNA(Leu) + H(+). It carries out the reaction L-phenylalanyl-tRNA(Phe) + an N-terminal L-alpha-aminoacyl-[protein] = an N-terminal L-phenylalanyl-L-alpha-aminoacyl-[protein] + tRNA(Phe). Functions in the N-end rule pathway of protein degradation where it conjugates Leu, Phe and, less efficiently, Met from aminoacyl-tRNAs to the N-termini of proteins containing an N-terminal arginine or lysine. The protein is Leucyl/phenylalanyl-tRNA--protein transferase of Escherichia fergusonii (strain ATCC 35469 / DSM 13698 / CCUG 18766 / IAM 14443 / JCM 21226 / LMG 7866 / NBRC 102419 / NCTC 12128 / CDC 0568-73).